The chain runs to 193 residues: Histone H5 (193 aa).

Pro residues predominate over residues 1–11; sequence TDSPIPAPAPA. Disordered regions lie at residues 1–29 and 80–193; these read TDSPIPAPAPAAKPKRARAPRKPASHPTY and GVLK…PKKK. Residues 13-24 show a composition bias toward basic residues; sequence KPKRARAPRKPA. One can recognise an H15 domain in the interval 25–98; that stretch reads SHPTYSEMIA…GASGSFRLAK (74 aa). Residues 104 to 193 are compositionally biased toward basic residues; the sequence is RSPAGRKKKK…SGARKSPKKK (90 aa).

It belongs to the histone H1/H5 family. In terms of tissue distribution, erythroid cells.

The protein resides in the nucleus. The protein localises to the chromosome. Histone H5 performs the same function as H1, being necessary for the condensation of nucleosome chains into higher order structures, and replaces histone H1 in certain cells. This is Histone H5 from Anser anser anser (Western greylag goose).